The sequence spans 360 residues: Histidinol-phosphate aminotransferase (360 aa).

Lys-211 is modified (N6-(pyridoxal phosphate)lysine).

Belongs to the class-II pyridoxal-phosphate-dependent aminotransferase family. Histidinol-phosphate aminotransferase subfamily. As to quaternary structure, homodimer. Requires pyridoxal 5'-phosphate as cofactor.

It carries out the reaction L-histidinol phosphate + 2-oxoglutarate = 3-(imidazol-4-yl)-2-oxopropyl phosphate + L-glutamate. It participates in amino-acid biosynthesis; L-histidine biosynthesis; L-histidine from 5-phospho-alpha-D-ribose 1-diphosphate: step 7/9. The polypeptide is Histidinol-phosphate aminotransferase (Cronobacter sakazakii (strain ATCC BAA-894) (Enterobacter sakazakii)).